The sequence spans 392 residues: uncharacterized protein (392 aa).

This sequence belongs to the chlamydial CPn_0675/CT_696/TC_0068 family.

This is an uncharacterized protein from Chlamydia muridarum (strain MoPn / Nigg).